The chain runs to 292 residues: Troponin I (292 aa).

The residue at position 1 (serine 1) is an N-acetylserine. Residues 1–149 form a disordered region; that stretch reads SSLEERRAAR…GLGGLSPEKK (149 aa). Residues 46-55 show a composition bias toward low complexity; sequence YSAPAEPAYD. The segment covering 58–134 has biased composition (basic and acidic residues); sequence AENRRRQQQE…EARRMAEEQK (77 aa). Positions 237–250 are actin-binding; it reads DTKGKFVKPVLRKV. The segment at 255–292 is disordered; that stretch reads SKLDKIQRKEAKKSDFRDNLKSSREHEADKEGGEGENE.

The protein belongs to the troponin I family.

In terms of biological role, troponin I is the inhibitory subunit of troponin, the thin filament regulatory complex which confers calcium-sensitivity to striated muscle actomyosin ATPase activity. The sequence is that of Troponin I from Chlamys nipponensis akazara (Akazara scallop).